A 508-amino-acid polypeptide reads, in one-letter code: Maturase K (508 aa).

This sequence belongs to the intron maturase 2 family. MatK subfamily.

It is found in the plastid. Its subcellular location is the chloroplast. Usually encoded in the trnK tRNA gene intron. Probably assists in splicing its own and other chloroplast group II introns. The polypeptide is Maturase K (Coronilla varia (Crown vetch)).